The chain runs to 598 residues: Nuclear receptor subfamily 4 group A member 2 (598 aa).

The interval 1-22 is disordered; it reads MPCVQAQYGSSPQGASPASQSY. Low complexity predominate over residues 8 to 22; it reads YGSSPQGASPASQSY. Positions 260 to 335 form a DNA-binding region, nuclear receptor; it reads EGLCAVCGDN…VGMVKEVVRT (76 aa). 2 NR C4-type zinc fingers span residues 263–283 and 299–323; these read CAVC…CEGC and CLAN…FQKC. The short motif at 287 to 314 is the Bipartite nuclear localization signal (NLS1) element; sequence FKRTVQKNAKYVCLANKNCPVDKRRRNR. The segment at 337–361 is disordered; sequence SLKGRRGRLPSKPKSPQEPSPPSPP. The short motif at 338-350 is the Nuclear localization signal (NLS1) element; it reads LKGRRGRLPSKPK. Residues 352 to 361 are compositionally biased toward pro residues; it reads PQEPSPPSPP. One can recognise an NR LBD domain in the interval 360–595; sequence PPVSLISALV…AIIDKLFLDT (236 aa). The short motif at 443 to 452 is the nuclear export sequence (NES1) element; the sequence is FLELFVLRLA. Positions 568–577 match the nuclear export sequence (NES2) motif; that stretch reads QGLQRIFYLK.

This sequence belongs to the nuclear hormone receptor family. NR4 subfamily. In terms of assembly, interacts with SFPQ, NCOR2, SIN3A and HADC1. The interaction with NCOR2 increases in the absence of PITX3. Interacts with PER2. As to expression, expressed in a number of cell lines of T-cell, B-cell and fibroblast origin. Strong expression in brain tissue.

Its subcellular location is the cytoplasm. It is found in the nucleus. Transcriptional regulator which is important for the differentiation and maintenance of meso-diencephalic dopaminergic (mdDA) neurons during development. It is crucial for expression of a set of genes such as SLC6A3, SLC18A2, TH and DRD2 which are essential for development of mdDA neurons. In Homo sapiens (Human), this protein is Nuclear receptor subfamily 4 group A member 2 (NR4A2).